A 449-amino-acid polypeptide reads, in one-letter code: Protein CapK (449 aa).

Its pathway is capsule biogenesis; capsule polysaccharide biosynthesis. Functionally, required for the biosynthesis of type 1 capsular polysaccharide. The chain is Protein CapK (capK) from Staphylococcus aureus.